Here is a 483-residue protein sequence, read N- to C-terminus: Acetyl-coenzyme A carboxylase carboxyl transferase subunit beta, chloroplastic (483 aa).

In terms of domain architecture, CoA carboxyltransferase N-terminal spans 221-483; that stretch reads LWVQCENCYG…FQFHGFFPRP (263 aa). Zn(2+) is bound by residues Cys-225, Cys-228, Cys-244, and Cys-247. Residues 225–247 form a C4-type zinc finger; it reads CENCYGLNYKKFFSSKMNICEQC.

Belongs to the AccD/PCCB family. In terms of assembly, acetyl-CoA carboxylase is a heterohexamer composed of biotin carboxyl carrier protein, biotin carboxylase and 2 subunits each of ACCase subunit alpha and ACCase plastid-coded subunit beta (accD). It depends on Zn(2+) as a cofactor.

Its subcellular location is the plastid. The protein localises to the chloroplast stroma. It catalyses the reaction N(6)-carboxybiotinyl-L-lysyl-[protein] + acetyl-CoA = N(6)-biotinyl-L-lysyl-[protein] + malonyl-CoA. It functions in the pathway lipid metabolism; malonyl-CoA biosynthesis; malonyl-CoA from acetyl-CoA: step 1/1. Functionally, component of the acetyl coenzyme A carboxylase (ACC) complex. Biotin carboxylase (BC) catalyzes the carboxylation of biotin on its carrier protein (BCCP) and then the CO(2) group is transferred by the transcarboxylase to acetyl-CoA to form malonyl-CoA. This Nuphar advena (Common spatterdock) protein is Acetyl-coenzyme A carboxylase carboxyl transferase subunit beta, chloroplastic.